Reading from the N-terminus, the 984-residue chain is Respiratory nitrate reductase subunit alpha (984 aa).

The disordered stretch occupies residues 1-43 (MSRNDASQLDDGETTAESPPDDQANDAPEVGDPPGDPVDADSG). The span at 8–24 (QLDDGETTAESPPDDQA) shows a compositional bias: acidic residues. The region spanning 103–167 (DSVSRSTHSV…CYTDYVNADQ (65 aa)) is the 4Fe-4S Mo/W bis-MGD-type domain. Residues His110, Cys114, Cys118, and Cys153 each contribute to the [4Fe-4S] cluster site. Asp249 contacts Mo-bis(molybdopterin guanine dinucleotide).

The protein belongs to the prokaryotic molybdopterin-containing oxidoreductase family. Probable multiprotein complex; a catalytic heterodimer of an alpha and beta chain is proposed to associate with additional subunits involved in membrane attachment and electron transfer. [4Fe-4S] cluster is required as a cofactor. Requires Mo-bis(molybdopterin guanine dinucleotide) as cofactor. Post-translationally, exported by the Tat system.

It is found in the cell membrane. The catalysed reaction is nitrate + a quinol = a quinone + nitrite + H2O. With respect to regulation, inhibited by cyanide, azide and antimycin A. Enzyme stability is not dependent on salt concentration. In terms of biological role, the respiratory membrane-bound nitrate reductase enzyme complex plays a role in generation of metabolic energy by using nitrate as a terminal electron acceptor during anaerobic conditions. The alpha chain is the actual site of nitrate reduction. The protein is Respiratory nitrate reductase subunit alpha (narG) of Haloferax mediterranei (strain ATCC 33500 / DSM 1411 / JCM 8866 / NBRC 14739 / NCIMB 2177 / R-4) (Halobacterium mediterranei).